The following is a 303-amino-acid chain: UPF0282 protein PAE3680 (303 aa).

Belongs to the UPF0282 family.

This Pyrobaculum aerophilum (strain ATCC 51768 / DSM 7523 / JCM 9630 / CIP 104966 / NBRC 100827 / IM2) protein is UPF0282 protein PAE3680.